The following is a 55-amino-acid chain: Large ribosomal subunit protein bL33 (55 aa).

The protein belongs to the bacterial ribosomal protein bL33 family.

The sequence is that of Large ribosomal subunit protein bL33 from Methylacidiphilum infernorum (isolate V4) (Methylokorus infernorum (strain V4)).